We begin with the raw amino-acid sequence, 124 residues long: Flagellar transcriptional regulator FlhD (124 aa).

The protein belongs to the FlhD family. Homodimer; disulfide-linked. Forms a heterohexamer composed of two FlhC and four FlhD subunits. Each FlhC binds a FlhD dimer, forming a heterotrimer, and a hexamer assembles by dimerization of two heterotrimers.

It localises to the cytoplasm. Functionally, functions in complex with FlhC as a master transcriptional regulator that regulates transcription of several flagellar and non-flagellar operons by binding to their promoter region. Activates expression of class 2 flagellar genes, including fliA, which is a flagellum-specific sigma factor that turns on the class 3 genes. Also regulates genes whose products function in a variety of physiological pathways. The polypeptide is Flagellar transcriptional regulator FlhD (Pectobacterium carotovorum (Erwinia carotovora)).